A 343-amino-acid chain; its full sequence is UDP-3-O-acylglucosamine N-acyltransferase 2 (343 aa).

H251 serves as the catalytic Proton acceptor.

The protein belongs to the transferase hexapeptide repeat family. LpxD subfamily. Homotrimer.

The catalysed reaction is a UDP-3-O-[(3R)-3-hydroxyacyl]-alpha-D-glucosamine + a (3R)-hydroxyacyl-[ACP] = a UDP-2-N,3-O-bis[(3R)-3-hydroxyacyl]-alpha-D-glucosamine + holo-[ACP] + H(+). It participates in bacterial outer membrane biogenesis; LPS lipid A biosynthesis. Catalyzes the N-acylation of UDP-3-O-acylglucosamine using 3-hydroxyacyl-ACP as the acyl donor. Is involved in the biosynthesis of lipid A, a phosphorylated glycolipid that anchors the lipopolysaccharide to the outer membrane of the cell. The chain is UDP-3-O-acylglucosamine N-acyltransferase 2 from Legionella pneumophila (strain Lens).